Consider the following 85-residue polypeptide: MSLLDYFKSKKKPSTAVMAKERLQIIVAHQRGQRDTPDYFPQMKQEIIAVIRKYVQISDDQVSVQLDQNDDNLSVLELNVTLPDR.

It belongs to the MinE family.

In terms of biological role, prevents the cell division inhibition by proteins MinC and MinD at internal division sites while permitting inhibition at polar sites. This ensures cell division at the proper site by restricting the formation of a division septum at the midpoint of the long axis of the cell. The sequence is that of Cell division topological specificity factor from Shewanella oneidensis (strain ATCC 700550 / JCM 31522 / CIP 106686 / LMG 19005 / NCIMB 14063 / MR-1).